A 565-amino-acid chain; its full sequence is Sulfite reductase [NADPH] hemoprotein beta-component (565 aa).

Positions 429, 435, 474, and 478 each coordinate [4Fe-4S] cluster. Cysteine 478 contributes to the siroheme binding site.

It belongs to the nitrite and sulfite reductase 4Fe-4S domain family. In terms of assembly, alpha(8)-beta(8). The alpha component is a flavoprotein, the beta component is a hemoprotein. Requires siroheme as cofactor. It depends on [4Fe-4S] cluster as a cofactor.

It catalyses the reaction hydrogen sulfide + 3 NADP(+) + 3 H2O = sulfite + 3 NADPH + 4 H(+). It functions in the pathway sulfur metabolism; hydrogen sulfide biosynthesis; hydrogen sulfide from sulfite (NADPH route): step 1/1. In terms of biological role, component of the sulfite reductase complex that catalyzes the 6-electron reduction of sulfite to sulfide. This is one of several activities required for the biosynthesis of L-cysteine from sulfate. This Shewanella putrefaciens (strain CN-32 / ATCC BAA-453) protein is Sulfite reductase [NADPH] hemoprotein beta-component.